Consider the following 421-residue polypeptide: Uracil permease (421 aa).

Transmembrane regions (helical) follow at residues 18 to 38 (IPLS…VPML), 41 to 61 (INPA…IFLC), 65 to 85 (IPAY…VIST), 89 to 109 (EAAL…GLLV), 115 to 135 (GWIE…VIGL), 160 to 180 (PKVI…NVMF), 186 to 206 (IIPI…LGIV), 232 to 252 (IAII…HLIV), 304 to 324 (VYSI…SFVG), 329 to 349 (LIQT…FGVI), 371 to 391 (ILTA…WGNF), and 393 to 413 (MKGM…FNII).

Belongs to the nucleobase:cation symporter-2 (NCS2) (TC 2.A.40) family.

It localises to the cell membrane. Its activity is regulated as follows. Inhibited by the proton gradient disruptor carbonyl cyanide m-chlorophenylhydrazone (CCCP), but not by the sodium gradient disruptor ouabain. Both xanthine and uric acid act as competitive inhibitors of uracil transport. Its function is as follows. Specific for the uptake of uracil. Transport is probably proton-dependent. The polypeptide is Uracil permease (Paenibacillus larvae subsp. larvae (strain NRRL B-3650 / LMG 16245)).